Consider the following 297-residue polypeptide: Protoheme IX farnesyltransferase 1 (297 aa).

The next 9 helical transmembrane spans lie at 23 to 43, 45 to 65, 93 to 113, 117 to 137, 145 to 165, 171 to 191, 216 to 236, 241 to 261, and 277 to 297; these read VVVL…RAGV, WSVL…AAVV, LPAL…LLVF, LTAW…TGFL, IVIG…AVSG, PLLL…ALAI, LHIL…YAIH, LYLV…WVLY, and IGYL…LLNL.

The protein belongs to the UbiA prenyltransferase family. Protoheme IX farnesyltransferase subfamily.

The protein resides in the cell inner membrane. The enzyme catalyses heme b + (2E,6E)-farnesyl diphosphate + H2O = Fe(II)-heme o + diphosphate. It participates in porphyrin-containing compound metabolism; heme O biosynthesis; heme O from protoheme: step 1/1. Functionally, converts heme B (protoheme IX) to heme O by substitution of the vinyl group on carbon 2 of heme B porphyrin ring with a hydroxyethyl farnesyl side group. The chain is Protoheme IX farnesyltransferase 1 from Pseudomonas putida (strain ATCC 47054 / DSM 6125 / CFBP 8728 / NCIMB 11950 / KT2440).